The primary structure comprises 316 residues: Methionyl-tRNA formyltransferase (316 aa).

117-120 (SLLP) contributes to the (6S)-5,6,7,8-tetrahydrofolate binding site.

It belongs to the Fmt family.

It carries out the reaction L-methionyl-tRNA(fMet) + (6R)-10-formyltetrahydrofolate = N-formyl-L-methionyl-tRNA(fMet) + (6S)-5,6,7,8-tetrahydrofolate + H(+). Functionally, attaches a formyl group to the free amino group of methionyl-tRNA(fMet). The formyl group appears to play a dual role in the initiator identity of N-formylmethionyl-tRNA by promoting its recognition by IF2 and preventing the misappropriation of this tRNA by the elongation apparatus. This Janthinobacterium sp. (strain Marseille) (Minibacterium massiliensis) protein is Methionyl-tRNA formyltransferase.